The chain runs to 163 residues: Phosphopantetheine adenylyltransferase (163 aa).

Ser-9 contributes to the substrate binding site. Residues 9–10 (SF) and His-17 contribute to the ATP site. Substrate is bound by residues Lys-41, Thr-73, and Arg-87. ATP contacts are provided by residues 88 to 90 (GLR), Glu-98, and 123 to 129 (YAYFSSS).

This sequence belongs to the bacterial CoaD family. In terms of assembly, homohexamer. Mg(2+) is required as a cofactor.

It localises to the cytoplasm. The catalysed reaction is (R)-4'-phosphopantetheine + ATP + H(+) = 3'-dephospho-CoA + diphosphate. It participates in cofactor biosynthesis; coenzyme A biosynthesis; CoA from (R)-pantothenate: step 4/5. Its function is as follows. Reversibly transfers an adenylyl group from ATP to 4'-phosphopantetheine, yielding dephospho-CoA (dPCoA) and pyrophosphate. The sequence is that of Phosphopantetheine adenylyltransferase from Lactiplantibacillus plantarum (strain ATCC BAA-793 / NCIMB 8826 / WCFS1) (Lactobacillus plantarum).